The chain runs to 216 residues: Pyridoxine/pyridoxamine 5'-phosphate oxidase (216 aa).

Residues 63–68, 78–79, Lys85, and Gln107 contribute to the FMN site; these read RMVLMK and YS. Position 68 (Lys68) interacts with substrate. Substrate-binding residues include Tyr125 and Arg129. FMN-binding positions include 142-143 and Trp187; that span reads QS. 193–195 is a substrate binding site; that stretch reads RLH. FMN is bound at residue Arg197.

This sequence belongs to the pyridoxamine 5'-phosphate oxidase family. Homodimer. The cofactor is FMN.

The enzyme catalyses pyridoxamine 5'-phosphate + O2 + H2O = pyridoxal 5'-phosphate + H2O2 + NH4(+). It catalyses the reaction pyridoxine 5'-phosphate + O2 = pyridoxal 5'-phosphate + H2O2. Its pathway is cofactor metabolism; pyridoxal 5'-phosphate salvage; pyridoxal 5'-phosphate from pyridoxamine 5'-phosphate: step 1/1. It functions in the pathway cofactor metabolism; pyridoxal 5'-phosphate salvage; pyridoxal 5'-phosphate from pyridoxine 5'-phosphate: step 1/1. Its function is as follows. Catalyzes the oxidation of either pyridoxine 5'-phosphate (PNP) or pyridoxamine 5'-phosphate (PMP) into pyridoxal 5'-phosphate (PLP). In Bradyrhizobium sp. (strain BTAi1 / ATCC BAA-1182), this protein is Pyridoxine/pyridoxamine 5'-phosphate oxidase.